The sequence spans 602 residues: Elongation factor 4 (602 aa).

Residues 8 to 189 form the tr-type G domain; sequence KNIRNFSIIA…KIITTIPAPS (182 aa). GTP is bound by residues 20-25 and 136-139; these read DHGKST and NKID.

This sequence belongs to the TRAFAC class translation factor GTPase superfamily. Classic translation factor GTPase family. LepA subfamily.

Its subcellular location is the cell inner membrane. The enzyme catalyses GTP + H2O = GDP + phosphate + H(+). In terms of biological role, required for accurate and efficient protein synthesis under certain stress conditions. May act as a fidelity factor of the translation reaction, by catalyzing a one-codon backward translocation of tRNAs on improperly translocated ribosomes. Back-translocation proceeds from a post-translocation (POST) complex to a pre-translocation (PRE) complex, thus giving elongation factor G a second chance to translocate the tRNAs correctly. Binds to ribosomes in a GTP-dependent manner. In Helicobacter pylori (strain Shi470), this protein is Elongation factor 4.